A 183-amino-acid chain; its full sequence is MKQLLEFIPLILFFTVYKLYGVQQAAITLVIATVIQLIVLKVLYKKIEKSQWIMGIFAVFFGILTAYFNDLNFLKWKVTIINGLFAAVLLVSQFVFKKPIIQMLLGKELKLPTNVWNRLNLGWAGFFIICMLLNIVISYYFSDDVWATFKTFGFTGLSLIAAIATGVYLYPHLKNVENTNEQA.

5 helical membrane-spanning segments follow: residues 19 to 39 (LYGVQQAAITLVIATVIQLIV), 53 to 73 (IMGIFAVFFGILTAYFNDLNF), 76 to 96 (WKVTIINGLFAAVLLVSQFVF), 121 to 141 (LGWAGFFIICMLLNIVISYYF), and 151 to 171 (TFGFTGLSLIAAIATGVYLYP).

Belongs to the YciB family.

Its subcellular location is the cell inner membrane. Plays a role in cell envelope biogenesis, maintenance of cell envelope integrity and membrane homeostasis. The chain is Inner membrane-spanning protein YciB from Actinobacillus pleuropneumoniae serotype 5b (strain L20).